The chain runs to 212 residues: Transcription antitermination protein NusB (212 aa).

Disordered regions lie at residues 1–34 (MSDEQSTPASGRPPRQSRGGLTSTGARKAASKSN) and 169–212 (EHDR…QAAG). A compositionally biased stretch (low complexity) spans 178–212 (APAQPAAKADTATDAVADAATDAAAADDAADQAAG).

It belongs to the NusB family.

Involved in transcription antitermination. Required for transcription of ribosomal RNA (rRNA) genes. Binds specifically to the boxA antiterminator sequence of the ribosomal RNA (rrn) operons. In Delftia acidovorans (strain DSM 14801 / SPH-1), this protein is Transcription antitermination protein NusB.